The chain runs to 301 residues: GTPase Era (301 aa).

One can recognise an Era-type G domain in the interval 11 to 180; sequence RSGIITLVGR…KDVFFENCLN (170 aa). Residues 19 to 26 are G1; sequence GRPNVGKS. 19–26 contributes to the GTP binding site; that stretch reads GRPNVGKS. The interval 45–49 is G2; sequence QTTRR. A G3 region spans residues 66 to 69; sequence DTPG. GTP is bound by residues 66–70 and 129–132; these read DTPGI and TKID. The G4 stretch occupies residues 129–132; sequence TKID. Positions 159-161 are G5; the sequence is VSA. Residues 210-286 form the KH type-2 domain; sequence LEQEIPHSLL…YLRLIVKVVK (77 aa).

The protein belongs to the TRAFAC class TrmE-Era-EngA-EngB-Septin-like GTPase superfamily. Era GTPase family. Monomer.

Its subcellular location is the cytoplasm. It localises to the cell membrane. Functionally, an essential GTPase that binds both GDP and GTP, with rapid nucleotide exchange. Plays a role in 16S rRNA processing and 30S ribosomal subunit biogenesis and possibly also in cell cycle regulation and energy metabolism. The protein is GTPase Era of Tropheryma whipplei (strain TW08/27) (Whipple's bacillus).